We begin with the raw amino-acid sequence, 492 residues long: Ferruginol synthase (492 aa).

Residues Met-1–Ser-21 form a helical membrane-spanning segment. Over Gly-22–Pro-492 the chain is Cytoplasmic. Cys-436 serves as a coordination point for heme.

Belongs to the cytochrome P450 family. The cofactor is heme.

The protein resides in the endoplasmic reticulum membrane. It carries out the reaction abieta-8,11,13-triene + reduced [NADPH--hemoprotein reductase] + O2 = ferruginol + oxidized [NADPH--hemoprotein reductase] + H2O + H(+). It participates in secondary metabolite biosynthesis; terpenoid biosynthesis. Functionally, cytochrome P450 enzyme (CYP) which catalyzes a unique two-electron oxidation cascade on abieta-8,11,13-triene to produce ferruginol, an intermediate in tanshinone biosynthesis. This chain is Ferruginol synthase, found in Isodon rubescens (Rabdosia rubescens).